The following is a 507-amino-acid chain: WD-40 repeat-containing protein MSI4 (507 aa).

Residue Met-1 is modified to N-acetylmethionine. The tract at residues 1-66 is disordered; it reads MESDEAAAVS…KTQQSPSVDE (66 aa). WD repeat units follow at residues 95–137, 162–202, and 217–257; these read RWGP…KPRV, IHPG…NRHA, and GHQD…TTIG. The span at 258–272 shows a compositional bias: polar residues; it reads TDSKSSGSIIKQTGE. The interval 258 to 282 is disordered; sequence TDSKSSGSIIKQTGEGTDKNESPTV. WD repeat units lie at residues 290–330, 335–375, 384–424, and 439–486; these read GHED…NPVT, AHDA…ANGV, GHKA…KKSD, and GHRD…YRPE. The DWD box signature appears at 308–323; the sequence is FCSVGDDSCLILWDAR.

The protein belongs to the WD repeat RBAP46/RBAP48/MSI1 family. As to quaternary structure, interacts with AHL16 and HOS1. Interacts with LHP1, PDP1, PDP2 and PDP3. Component of the PRC2 (polycomb repressive complex 2) complex which regulates histone methylation on histone H3K27. Expressed in rosette leaves, cauline leaves, main stems and developing fruits. Expressed at higher levels in roots and flowers.

It localises to the nucleus. Its function is as follows. Core histone-binding subunit that may target chromatin assembly factors, chromatin remodeling factors and histone deacetylases to their histone substrates in a manner that is regulated by nucleosomal DNA. Component of the flowering autonomous pathway which positively regulates flowering by promoting transcriptional repression of the flowering repressor FLC. May promote histone deacetylation at the FLC locus leading to the formation of repressive chromatin structures. Forms a histone deacetylase complex with HDA5, HDA6 and FLD that represses FLC gene expression to control flowering time. Also negatively regulates cold-responsive genes. Acts together with PDP1 and MSI5 to regulate the function of the PRC2 complex on FLC. Required for systemic acquired resistance (SAR) toward pathogenic bacteria (e.g. Pseudomonas syringae pv tomato DC3000 (avrPto)). Together with FLD and MSI4/FVE, contributes to dehydroabietinal-dependent (DA, a diterpenoid tricyclic diterpene) activation of flowering ans SAR. This is WD-40 repeat-containing protein MSI4 from Arabidopsis thaliana (Mouse-ear cress).